Here is a 494-residue protein sequence, read N- to C-terminus: NADH-ubiquinone oxidoreductase chain 4 (494 aa).

The next 14 helical transmembrane spans lie at 6 to 26 (IMIYLFSLLLIPLIVYFLLIY), 41 to 61 (TIGLTTLIINLILSMIIFILF), 87 to 107 (IDGISIYFLLLTTMIMPISLV), 118 to 138 (VLSFVIIILLLETLLLAVFLV), 141 to 161 (ILLFYIFFESILPPLFLLIGL), 172 to 192 (FYLFLYTLLGSLFMLLSIITM), 207 to 227 (ANFSYITQLFLFYGIFISFAV), 246 to 266 (PLAGSVILAGIVWKLRWYGIF), 280 to 300 (YTYIVYVIGVITIFYTSFSTL), 302 to 322 (TIAIKELIAYSSVSHAAVYLL), 336 to 356 (IALGLAHGFVSSGLFICVGGI), 375 to 395 (LMPIFCILFLYITLGNCGSPL), 415 to 435 (VLGVLASTSIVFSAAYTIFMF), and 460 to 480 (FILLISLVVPAVFFGIYPAVI).

Belongs to the complex I subunit 4 family.

Its subcellular location is the mitochondrion membrane. The enzyme catalyses a ubiquinone + NADH + 5 H(+)(in) = a ubiquinol + NAD(+) + 4 H(+)(out). Functionally, core subunit of the mitochondrial membrane respiratory chain NADH dehydrogenase (Complex I) that is believed to belong to the minimal assembly required for catalysis. Complex I functions in the transfer of electrons from NADH to the respiratory chain. The immediate electron acceptor for the enzyme is believed to be ubiquinone. The sequence is that of NADH-ubiquinone oxidoreductase chain 4 (ND4) from Trichophyton rubrum (Athlete's foot fungus).